A 180-amino-acid polypeptide reads, in one-letter code: WPP domain-containing protein 2 (180 aa).

Residues 1 to 26 (MAETAETINTTISSPPPESESSTTIS) are compositionally biased toward low complexity. 2 disordered regions span residues 1–61 (MAET…LRIW) and 140–180 (SVKA…KSEA). The segment covering 27 to 36 (AMTDPTSQEA) has biased composition (polar residues). The span at 37–53 (ASKDTDLTKEAESEKKP) shows a compositional bias: basic and acidic residues. The interval 44–147 (TKEAESEKKP…LESVKARSNA (104 aa)) is WPP. Serine 173 carries the phosphoserine modification.

Binds to FPP proteins. Interacts with WAP, WIP1, WIP2 and WIP3 through its WPP domain. Interacts with WIT1 and HSP70-1. As to expression, expressed in roots, stems, leaves and flowers.

The protein localises to the nucleus envelope. It is found in the cytoplasm. Its subcellular location is the nucleus. The protein resides in the golgi apparatus. Its function is as follows. Regulates the mitotic activity in roots. Plays a role with HSP70-1 in facilitating WIT1 nuclear envelope targeting. This chain is WPP domain-containing protein 2 (WPP2), found in Arabidopsis thaliana (Mouse-ear cress).